The primary structure comprises 163 residues: Protein-export protein SecB (163 aa).

This sequence belongs to the SecB family. Homotetramer, a dimer of dimers. One homotetramer interacts with 1 SecA dimer.

The protein resides in the cytoplasm. Functionally, one of the proteins required for the normal export of preproteins out of the cell cytoplasm. It is a molecular chaperone that binds to a subset of precursor proteins, maintaining them in a translocation-competent state. It also specifically binds to its receptor SecA. This chain is Protein-export protein SecB, found in Shewanella woodyi (strain ATCC 51908 / MS32).